The chain runs to 181 residues: Ninjurin-B (181 aa).

Positions 1-10 are enriched in basic and acidic residues; that stretch reads MDSGEVKISL. Positions 1–72 are disordered; sequence MDSGEVKISL…SNKKCSSDLS (72 aa). Residues 1 to 115 lie on the Extracellular side of the membrane; it reads MDSGEVKISL…YNDKASTYIY (115 aa). Polar residues predominate over residues 12–26; sequence DSPSSGESFASTTSG. Over residues 33 to 49 the composition is skewed to basic and acidic residues; that stretch reads RDLDIQVHESHIKDDQF. The interval 80–91 is helix alpha1; the sequence is NKNVAEGLMDIA. The helix alpha2 stretch occupies residues 94–110; it reads SANANQLRFLITYNDKA. Residues 116–136 form a helical membrane-spanning segment; sequence SMIMVILSLVLQLLVGIMLIF. Over 137-153 the chain is Cytoplasmic; sequence KRRLKRFRNRSYERTND. A helical transmembrane segment spans residues 154 to 174; it reads LLVMGVFMITVINILLAAFTT. At 175-181 the chain is on the extracellular side; it reads TDGGGSH.

It belongs to the ninjurin family.

The protein localises to the membrane. Its function is as follows. Effector of non-apoptotic necrotic cell death that mediates plasma membrane rupture (cytolysis): oligomerizes in response to death stimuli and promotes plasma membrane rupture by introducing hydrophilic faces of 2 alpha helices into the hydrophobic membrane, leading to release intracellular molecules that propagate the inflammatory response. Also acts as a homophilic transmembrane adhesion molecule that promotes cell adhesion by mediating homophilic interactions via its extracellular region. This is Ninjurin-B from Drosophila melanogaster (Fruit fly).